We begin with the raw amino-acid sequence, 85 residues long: Cell division topological specificity factor (85 aa).

It belongs to the MinE family.

Its function is as follows. Prevents the cell division inhibition by proteins MinC and MinD at internal division sites while permitting inhibition at polar sites. This ensures cell division at the proper site by restricting the formation of a division septum at the midpoint of the long axis of the cell. The polypeptide is Cell division topological specificity factor (Xylella fastidiosa (strain M12)).